We begin with the raw amino-acid sequence, 148 residues long: SsrA-binding protein (148 aa).

The protein belongs to the SmpB family.

Its subcellular location is the cytoplasm. Its function is as follows. Required for rescue of stalled ribosomes mediated by trans-translation. Binds to transfer-messenger RNA (tmRNA), required for stable association of tmRNA with ribosomes. tmRNA and SmpB together mimic tRNA shape, replacing the anticodon stem-loop with SmpB. tmRNA is encoded by the ssrA gene; the 2 termini fold to resemble tRNA(Ala) and it encodes a 'tag peptide', a short internal open reading frame. During trans-translation Ala-aminoacylated tmRNA acts like a tRNA, entering the A-site of stalled ribosomes, displacing the stalled mRNA. The ribosome then switches to translate the ORF on the tmRNA; the nascent peptide is terminated with the 'tag peptide' encoded by the tmRNA and targeted for degradation. The ribosome is freed to recommence translation, which seems to be the essential function of trans-translation. In Ehrlichia ruminantium (strain Welgevonden), this protein is SsrA-binding protein.